The chain runs to 340 residues: DNA-directed RNA polymerase subunit alpha (340 aa).

Residues 1–236 (MLSLSKNWNT…EQLQLFISFE (236 aa)) form an alpha N-terminal domain (alpha-NTD) region. The alpha C-terminal domain (alpha-CTD) stretch occupies residues 251–340 (FAPYLLKRVD…LSKRYEDSYN (90 aa)).

It belongs to the RNA polymerase alpha chain family. As to quaternary structure, homodimer. The RNAP catalytic core consists of 2 alpha, 1 beta, 1 beta' and 1 omega subunit. When a sigma factor is associated with the core the holoenzyme is formed, which can initiate transcription.

The catalysed reaction is RNA(n) + a ribonucleoside 5'-triphosphate = RNA(n+1) + diphosphate. Functionally, DNA-dependent RNA polymerase catalyzes the transcription of DNA into RNA using the four ribonucleoside triphosphates as substrates. This Rickettsia peacockii (strain Rustic) protein is DNA-directed RNA polymerase subunit alpha.